Here is a 627-residue protein sequence, read N- to C-terminus: Spindle assembly abnormal protein 6 homolog (627 aa).

Residues 39-91 (VHRKDLVVRLTDDTDLYFLYNLIISEEDFQSLKVQQGLLIDFTSFPQKFIDLL) form the PISA domain. A coiled-coil region spans residues 153 to 473 (LASCLSSVKE…SREVLKTNEN (321 aa)). Disordered stretches follow at residues 187–257 (QTLS…LQTK) and 561–586 (EVSP…SKYF). Residues 191-201 (EKSRELDKLRS) are compositionally biased toward basic and acidic residues. A compositionally biased stretch (polar residues) spans 202–213 (EWTSQTTSLSSR). A compositionally biased stretch (basic and acidic residues) spans 214–226 (HMQDLTAEREKAL). A compositionally biased stretch (low complexity) spans 229 to 238 (QSRLQQQNEQ).

In terms of assembly, nine homodimers form a cartwheel structure with an internal diameter of 23 nM and radial spokes connecting to the microtubule triplets.

Its subcellular location is the cytoplasm. The protein localises to the cytoskeleton. It localises to the microtubule organizing center. The protein resides in the centrosome. Functionally, central scaffolding component of the centrioles ensuring their 9-fold symmetry. Required for centrosome biogenesis and duplication: required both for mother-centriole-dependent centriole duplication and deuterosome-dependent centriole amplification in multiciliated cells. The polypeptide is Spindle assembly abnormal protein 6 homolog (sass6) (Danio rerio (Zebrafish)).